The following is a 325-amino-acid chain: Glutarate 2-hydroxylase (325 aa).

Positions 160, 162, and 292 each coordinate Fe cation.

Belongs to the glutarate hydroxylase family. In terms of assembly, homotetramer. Requires Fe(2+) as cofactor.

It catalyses the reaction glutarate + 2-oxoglutarate + O2 = (S)-2-hydroxyglutarate + succinate + CO2. It functions in the pathway amino-acid degradation. Its function is as follows. Acts as an alpha-ketoglutarate-dependent dioxygenase catalyzing hydroxylation of glutarate (GA) to L-2-hydroxyglutarate (L2HG). Functions in a L-lysine degradation pathway that proceeds via cadaverine, glutarate and L-2-hydroxyglutarate. The polypeptide is Glutarate 2-hydroxylase (Citrobacter koseri (strain ATCC BAA-895 / CDC 4225-83 / SGSC4696)).